The following is a 53-amino-acid chain: MIKAVIEEGLQSCTEPRSYEEGYVDADGNLVRYYEVQAPNYDDIRPPISQQEF.

This is an uncharacterized protein from Archaeoglobus fulgidus (strain ATCC 49558 / DSM 4304 / JCM 9628 / NBRC 100126 / VC-16).